Reading from the N-terminus, the 82-residue chain is Sec-independent protein translocase protein TatA (82 aa).

The chain crosses the membrane as a helical span at residues methionine 1 to glycine 21. The segment at lysine 41–alanine 82 is disordered. The segment covering alanine 42–alanine 82 has biased composition (basic and acidic residues).

This sequence belongs to the TatA/E family. In terms of assembly, the Tat system comprises two distinct complexes: a TatABC complex, containing multiple copies of TatA, TatB and TatC subunits, and a separate TatA complex, containing only TatA subunits. Substrates initially bind to the TatABC complex, which probably triggers association of the separate TatA complex to form the active translocon.

It localises to the cell inner membrane. In terms of biological role, part of the twin-arginine translocation (Tat) system that transports large folded proteins containing a characteristic twin-arginine motif in their signal peptide across membranes. TatA could form the protein-conducting channel of the Tat system. This Vibrio campbellii (strain ATCC BAA-1116) protein is Sec-independent protein translocase protein TatA.